The following is a 424-amino-acid chain: Probable methyltransferase EP424R (424 aa).

Residues 104–316 (QIVTNAWLKM…TYIVGKNRLR (213 aa)) enclose the Adrift-type SAM-dependent 2'-O-MTase domain. The S-adenosyl-L-methionine site is built by G136 and D229. The Proton acceptor role is filled by K269.

It is found in the virion. In African swine fever virus (strain Badajoz 1971 Vero-adapted) (Ba71V), this protein is Probable methyltransferase EP424R.